A 73-amino-acid polypeptide reads, in one-letter code: Large ribosomal subunit protein uL24 (73 aa).

A compositionally biased stretch (basic and acidic residues) spans 51 to 65; the sequence is DDNPKGGFIHKEKPM. The interval 51–73 is disordered; sequence DDNPKGGFIHKEKPMHISNVKKA.

Belongs to the universal ribosomal protein uL24 family. As to quaternary structure, part of the 50S ribosomal subunit.

Its function is as follows. One of two assembly initiator proteins, it binds directly to the 5'-end of the 23S rRNA, where it nucleates assembly of the 50S subunit. In terms of biological role, one of the proteins that surrounds the polypeptide exit tunnel on the outside of the subunit. The sequence is that of Large ribosomal subunit protein uL24 from Helicobacter pylori (strain Shi470).